A 338-amino-acid chain; its full sequence is Ferredoxin--NADP reductase (338 aa).

7 residues coordinate FAD: aspartate 38, glutamine 46, tyrosine 51, valine 91, phenylalanine 125, aspartate 291, and threonine 331.

It belongs to the ferredoxin--NADP reductase type 2 family. In terms of assembly, homodimer. Requires FAD as cofactor.

The catalysed reaction is 2 reduced [2Fe-2S]-[ferredoxin] + NADP(+) + H(+) = 2 oxidized [2Fe-2S]-[ferredoxin] + NADPH. This chain is Ferredoxin--NADP reductase, found in Orientia tsutsugamushi (strain Ikeda) (Rickettsia tsutsugamushi).